Here is a 548-residue protein sequence, read N- to C-terminus: 5-epi-aristolochene synthase (548 aa).

5 residues coordinate (2E,6E)-farnesyl diphosphate: Arg-264, Asp-301, Asp-305, Arg-441, and Asp-444. Mg(2+) is bound by residues Asp-301 and Asp-305. A DDXXD motif motif is present at residues 301–305; the sequence is DDTFD. Positions 444, 445, 448, and 452 each coordinate Mg(2+).

It belongs to the terpene synthase family. Monomer. The cofactor is Mg(2+). Post-translationally, self-alkylated at Tyr-520 in the presence of (2Z,6E)-farnesyl diphosphate ((Z,E)-FPP). Self-alkylated at Asp-444 at warm temperature (42 degrees Celsius) in the presence of (2E,6E)-farnesyl diphosphate ((E,E)-FPP).

The protein localises to the cytoplasm. The enzyme catalyses (2E,6E)-farnesyl diphosphate = (+)-5-epi-aristolochene + diphosphate. It carries out the reaction (2Z,6E)-farnesyl diphosphate = (+)-2-epi-prezizaene + diphosphate. The catalysed reaction is (2Z,6E)-farnesyl diphosphate = (-)-alpha-cedrene + diphosphate. It catalyses the reaction (2Z,6E)-farnesyl diphosphate = (-)-beta-curcumene + diphosphate. Its pathway is secondary metabolite biosynthesis; terpenoid biosynthesis. Inhibited activity toward farnesyl diphosphate (FPP) by anilinogeranyl diphosphate (AGPP); AGPP undergoes a cyclization event leading to the formation of a novel macrocyclic paracyclophane alkaloid. Repressed by sesquilavandulyl diphosphate (SPP) via the induction of self-alkyation. In terms of biological role, catalyzes the cyclization of trans,trans-farnesyl diphosphate (FPP) to the bicyclic intermediate 5-epi-aristolochene, initial step in the conversion of FPP to the sesquiterpenoid antifungal phytoalexin capsidiol. Produces germacrene A as an enzyme-bound intermediate that is not released by the enzyme, but is further cyclized to produce the bicyclic 5-epi-aristolochene. Mediates, at low levels, the formation of 4-epi-eremophilene and premnaspirodiene from trans,trans-farnesyl diphosphate. Also mediates the conversion of cis,trans-farnesyl diphosphate to cisoid minor products such as (+)-2-epi-prezizaene, (-)-alpha-cedrene and, to a lesser extent, (-)-beta-curcumene; also produces, at low levels, alpha-acoradiene and 4-epi-alpha-acoradiene, but barely nerolidol, alpha-bisabolol, epi-alpha-bisabolol and cis-farnesol. This chain is 5-epi-aristolochene synthase (EAS3), found in Nicotiana tabacum (Common tobacco).